The chain runs to 297 residues: HTH-type transcriptional regulator AceR (297 aa).

An HTH lysR-type domain is found at 1–60 (MNINQEQLLMFQAVMETGSFSAAARKLGKVPSAVSMSIANLEIDLNLTLFERKGREPTPT). The H-T-H motif DNA-binding region spans 20–39 (FSAAARKLGKVPSAVSMSIA).

This sequence belongs to the LysR transcriptional regulatory family. In terms of assembly, homodimer and homotetramer. Binding of chlorhexidine at the inducer-binding domain causes a quaternary structural change that favors interactions between dimers to form tetramers.

Its subcellular location is the cytoplasm. Functionally, regulates the expression of the AceI transporter. Binds DNA and chlorhexidine. Binds to regulatory sites within the intergenic region between the aceI and aceR genes, and affects the interaction between RNA polymerase (RNAP) and promoter DNA both in the presence and in the absence of chlorhexidine. In the absence of chlorhexidine, prevents transcription of the aceI gene by disrupting interactions between the promoter DNA and RNAP. In the presence of chlorhexidine, activates expression of aceI. When AceR interacts with chlorhexidine, it undergoes a conformational change and the tetrameric form either releases the DNA or shifts the position of the DNA-binding region to allow RNAP to bind onto the promoter DNA to proceed with aceI transcription. In Acinetobacter baumannii (strain ATCC 17978 / DSM 105126 / CIP 53.77 / LMG 1025 / NCDC KC755 / 5377), this protein is HTH-type transcriptional regulator AceR.